A 459-amino-acid polypeptide reads, in one-letter code: Chaperone SurA (459 aa).

An N-terminal signal peptide occupies residues 1–23; that stretch reads MNHRLVALSVASLALLAPLTVPA. PpiC domains follow at residues 197 to 301 and 312 to 411; these read VQQI…KVLE and VTQS…QLME.

The protein localises to the periplasm. The enzyme catalyses [protein]-peptidylproline (omega=180) = [protein]-peptidylproline (omega=0). In terms of biological role, chaperone involved in the correct folding and assembly of outer membrane proteins. Recognizes specific patterns of aromatic residues and the orientation of their side chains, which are found more frequently in integral outer membrane proteins. May act in both early periplasmic and late outer membrane-associated steps of protein maturation. In Albidiferax ferrireducens (strain ATCC BAA-621 / DSM 15236 / T118) (Rhodoferax ferrireducens), this protein is Chaperone SurA.